The chain runs to 328 residues: tRNA uridine(34) hydroxylase (328 aa).

One can recognise a Rhodanese domain in the interval 130 to 224 (LDKDTVVLDT…YGKDPEVQGE (95 aa)). Cysteine 184 acts as the Cysteine persulfide intermediate in catalysis.

The protein belongs to the TrhO family.

The enzyme catalyses uridine(34) in tRNA + AH2 + O2 = 5-hydroxyuridine(34) in tRNA + A + H2O. In terms of biological role, catalyzes oxygen-dependent 5-hydroxyuridine (ho5U) modification at position 34 in tRNAs. The sequence is that of tRNA uridine(34) hydroxylase from Streptococcus pneumoniae (strain Hungary19A-6).